The sequence spans 954 residues: Protein teashirt (954 aa).

3 disordered regions span residues 20 to 91, 167 to 207, and 276 to 331; these read LPTA…SLPS, ESAE…PQLG, and VKGG…GSGA. A compositionally biased stretch (gly residues) spans 47–57; sequence HGGGAGSGGVG. The segment covering 292-303 has biased composition (polar residues); the sequence is SKATTPQAASQP. A compositionally biased stretch (gly residues) spans 318–328; it reads SGGGSGGGAAG. The C2H2-type 1 zinc-finger motif lies at 354-378; sequence FRCVWCKQSFPTLEALTTHMKDSKH. The segment at 383–444 is disordered; it reads VPPFGNLPSN…YRGDPPTPLP (62 aa). Residues 417–428 show a composition bias toward low complexity; sequence SGSASNHSPSAN. 2 C2H2-type zinc fingers span residues 466–490 and 533–557; these read LKCMRCGESFRSLGEMTKHMQETQH and LTCKVCDKAFNSLGDLSNHMAKNNH. 3 disordered regions span residues 563–622, 689–714, and 748–935; these read LQSA…DKND, FDTPPRHASLPASSPSNSSTKNTSPV, and TSSE…NLTA. Positions 568–578 are enriched in basic residues; sequence ARKRPAPKKRE. The span at 579–588 shows a compositional bias: basic and acidic residues; the sequence is KSLPVRKLLE. The span at 696–712 shows a compositional bias: low complexity; the sequence is ASLPASSPSNSSTKNTS. Phosphoserine occurs at positions 750 and 758. Residues 778-807 are compositionally biased toward basic and acidic residues; sequence GHDEESSKPAIKQEREAESKPVKMEIKSEF. A compositionally biased stretch (low complexity) spans 842–851; the sequence is PKTPSSAASP. Polar residues-rich tracts occupy residues 862 to 885 and 893 to 907; these read AESQRSVTPKSPASSHKSYDGSSE and DSLNALSSMFDSLGS. A compositionally biased stretch (low complexity) spans 910–926; that stretch reads AGANSRAKLAAAAAAGG.

The protein belongs to the teashirt C2H2-type zinc-finger protein family. Binds arm. As to expression, shows a dynamic expression pattern during embryogenesis. Expressed in the embryonic trunk region (PS 3-13) with expression strongest in the thoracic segments. Expressed in a small group of cells corresponding to the anal tuft from stage 14. Strongly expressed in the embryonic ventral nerve cord. Also expressed in the proximal domain of the leg imaginal disk and in the region of the wing disk that will give rise to the proximal wing hinge. Expressed at high levels in the anterior and central embryonic midgut mesoderm and in the embryonic midgut endoderm. Expressed at a low level in more posterior visceral mesoderm of the gut. From stage 12 onwards, tsh and tio are colocalized in some cells of the CNS, trunk epidermis, hindgut and Malpighian tubules.

Its subcellular location is the nucleus. The protein resides in the cytoplasm. In terms of biological role, homeotic protein that acts downstream of Arm in the Wg cascade during embryogenesis to determine segment identity throughout the entire trunk. Acts cooperatively with other trunk homeotic proteins to repress head homeotic genes and therefore repress head segmental identity. Necessary, in combination with Scr, for the formation of the prothoracic segment. Promotes eye development in the dorsal region of the eye disk and suppresses eye development in the ventral region in combination with Wg-signaling and several early dorso-ventral eye patterning genes. Required for proper development of proximal leg segments. Has differential functions along the dorso-ventral axs of the antennal and leg disks. May play a role in wing hinge development. Possible involvement in chromatin structure for modulation of transcription. Binds DNA and can act as both a transcriptional repressor and activator. Positively regulates its own expression as well as that of Dll. Negatively regulates the expression of mod. Required for Wg-mediated transcriptional repression of Ubx in the midgut. Also represses transcription of lab in the midgut and is necessary for the proper formation of anterior and central midgut structures. Tiptop (tio) and teashirt (tsh) have, on the whole, common activities. Tio and tsh repress each other's expression and tsh has a crucial role for trunk patterning that is in part masked by ectopic expression of tiptop. Both genes share a common activity required for the activation of Ser and svb and the maintenance of en and wg. The chain is Protein teashirt (tsh) from Drosophila melanogaster (Fruit fly).